A 269-amino-acid chain; its full sequence is Aminodeoxychorismate lyase (269 aa).

At Lys140 the chain carries N6-(pyridoxal phosphate)lysine.

The protein belongs to the class-IV pyridoxal-phosphate-dependent aminotransferase family. As to quaternary structure, homodimer. It depends on pyridoxal 5'-phosphate as a cofactor.

It catalyses the reaction 4-amino-4-deoxychorismate = 4-aminobenzoate + pyruvate + H(+). The protein operates within cofactor biosynthesis; tetrahydrofolate biosynthesis; 4-aminobenzoate from chorismate: step 2/2. Involved in the biosynthesis of p-aminobenzoate (PABA), a precursor of tetrahydrofolate. Converts 4-amino-4-deoxychorismate into 4-aminobenzoate (PABA) and pyruvate. In Escherichia coli (strain K12), this protein is Aminodeoxychorismate lyase (pabC).